Reading from the N-terminus, the 428-residue chain is Enolase (428 aa).

A (2R)-2-phosphoglycerate-binding site is contributed by glutamine 163. Glutamate 205 functions as the Proton donor in the catalytic mechanism. Mg(2+) contacts are provided by aspartate 242, glutamate 285, and aspartate 312. Residues lysine 337, arginine 366, serine 367, and lysine 388 each coordinate (2R)-2-phosphoglycerate. Residue lysine 337 is the Proton acceptor of the active site.

This sequence belongs to the enolase family. As to quaternary structure, component of the RNA degradosome, a multiprotein complex involved in RNA processing and mRNA degradation. It depends on Mg(2+) as a cofactor.

The protein localises to the cytoplasm. The protein resides in the secreted. It localises to the cell surface. The enzyme catalyses (2R)-2-phosphoglycerate = phosphoenolpyruvate + H2O. The protein operates within carbohydrate degradation; glycolysis; pyruvate from D-glyceraldehyde 3-phosphate: step 4/5. Functionally, catalyzes the reversible conversion of 2-phosphoglycerate (2-PG) into phosphoenolpyruvate (PEP). It is essential for the degradation of carbohydrates via glycolysis. In Halorhodospira halophila (strain DSM 244 / SL1) (Ectothiorhodospira halophila (strain DSM 244 / SL1)), this protein is Enolase.